The sequence spans 176 residues: MENVVLVDENDNRVGCINKIDAHLNGDHLHRAFSCFIINSKNEVYIQQRAQSKLLWPGYWSNSYCSHPRPDEEISHAVMRRAEEELGIVINEEPKFLYKFQYKEKYKDVGYEHELCHVFVVFTDTPPTENPKEVSAGFFINIKDVQEYIHNNEEFCTPWFKKEWADILQNHFDKLC.

Mn(2+) is bound by residues histidine 23 and histidine 30. One can recognise a Nudix hydrolase domain in the interval 28-162 (HLHRAFSCFI…EEFCTPWFKK (135 aa)). The active site involves cysteine 65. Cysteine 65 is a binding site for Mg(2+). Histidine 67 lines the Mn(2+) pocket. Glutamate 85 contributes to the Mg(2+) binding site. Residues glutamate 112 and glutamate 114 each coordinate Mn(2+). Residue glutamate 114 is part of the active site.

It belongs to the IPP isomerase type 1 family. Homodimer. The cofactor is Mg(2+). Requires Mn(2+) as cofactor.

The protein localises to the cytoplasm. It catalyses the reaction isopentenyl diphosphate = dimethylallyl diphosphate. It functions in the pathway isoprenoid biosynthesis; dimethylallyl diphosphate biosynthesis; dimethylallyl diphosphate from isopentenyl diphosphate: step 1/1. Functionally, catalyzes the 1,3-allylic rearrangement of the homoallylic substrate isopentenyl (IPP) to its highly electrophilic allylic isomer, dimethylallyl diphosphate (DMAPP). This is Isopentenyl-diphosphate Delta-isomerase 1 from Photorhabdus laumondii subsp. laumondii (strain DSM 15139 / CIP 105565 / TT01) (Photorhabdus luminescens subsp. laumondii).